Here is a 212-residue protein sequence, read N- to C-terminus: Glycerol-3-phosphate acyltransferase (212 aa).

Helical transmembrane passes span 3-23, 78-98, 115-135, and 155-177; these read ILLAALVAYLIGSVSFAVVVS, DVAVACVAIAVFLGHLYPVFF, AVHPVLGLATALTWLIVAFFF, and FLFGTSHNPVAWAVLAMSVLLVW.

Belongs to the PlsY family. As to quaternary structure, probably interacts with PlsX.

It is found in the cell inner membrane. The catalysed reaction is an acyl phosphate + sn-glycerol 3-phosphate = a 1-acyl-sn-glycero-3-phosphate + phosphate. It functions in the pathway lipid metabolism; phospholipid metabolism. In terms of biological role, catalyzes the transfer of an acyl group from acyl-phosphate (acyl-PO(4)) to glycerol-3-phosphate (G3P) to form lysophosphatidic acid (LPA). This enzyme utilizes acyl-phosphate as fatty acyl donor, but not acyl-CoA or acyl-ACP. This is Glycerol-3-phosphate acyltransferase from Burkholderia ambifaria (strain ATCC BAA-244 / DSM 16087 / CCUG 44356 / LMG 19182 / AMMD) (Burkholderia cepacia (strain AMMD)).